A 2604-amino-acid polypeptide reads, in one-letter code: BEACH domain-containing protein B (2604 aa).

Residues 1761-1912 (VGTSEVLTSV…NAKEVGMLIV (152 aa)) form the BEACH-type PH domain. Positions 1936–2226 (DRRIAMEMAE…QIFRKKHPRR (291 aa)) constitute a BEACH domain. WD repeat units lie at residues 2254 to 2293 (HSPSAVLYVGVVDSNIVLVNQGLTLSVKIWLTTQLHSGGN), 2368 to 2407 (HHKDVVSCVAVTADSTILATGSYDTTVMVWDILRMRTPEK), 2433 to 2474 (GHDD…RSLK), 2476 to 2515 (PSGSAVSKLAASHHGRIVLYGDDDLSLHLYSINGKHLASS), 2516 to 2557 (ESNG…KRYN), and 2558 to 2596 (GAGKIITSLTVTQEECFLAGTKDGALLVYSIENPQHRKP).

Functionally, may be involved in the suppression of BCHC1 activity. This Arabidopsis thaliana (Mouse-ear cress) protein is BEACH domain-containing protein B.